Consider the following 284-residue polypeptide: 2-dehydro-3-deoxyphosphooctonate aldolase (284 aa).

It belongs to the KdsA family.

It is found in the cytoplasm. It catalyses the reaction D-arabinose 5-phosphate + phosphoenolpyruvate + H2O = 3-deoxy-alpha-D-manno-2-octulosonate-8-phosphate + phosphate. The protein operates within carbohydrate biosynthesis; 3-deoxy-D-manno-octulosonate biosynthesis; 3-deoxy-D-manno-octulosonate from D-ribulose 5-phosphate: step 2/3. It functions in the pathway bacterial outer membrane biogenesis; lipopolysaccharide biosynthesis. In Mannheimia succiniciproducens (strain KCTC 0769BP / MBEL55E), this protein is 2-dehydro-3-deoxyphosphooctonate aldolase.